Here is a 55-residue protein sequence, read N- to C-terminus: Large ribosomal subunit protein bL33A (55 aa).

The protein belongs to the bacterial ribosomal protein bL33 family.

In Mycobacterium sp. (strain JLS), this protein is Large ribosomal subunit protein bL33A.